A 117-amino-acid polypeptide reads, in one-letter code: Bomanin Bicipital 1 (117 aa).

The N-terminal stretch at 1 to 20 (MKCLILSFAIFVVLASQATA) is a signal peptide. Intrachain disulfides connect Cys-29-Cys-32 and Cys-107-Cys-110.

It belongs to the bomanin family. As to expression, hemolymph (at protein level).

The protein resides in the secreted. In terms of biological role, secreted immune-induced peptide induced by Toll signaling. Has a role in resistance to bacterial and fungal infections. This Drosophila melanogaster (Fruit fly) protein is Bomanin Bicipital 1.